Here is a 335-residue protein sequence, read N- to C-terminus: Anthranilate phosphoribosyltransferase (335 aa).

5-phospho-alpha-D-ribose 1-diphosphate contacts are provided by residues glycine 79, glycine 82–aspartate 83, serine 87, asparagine 89–threonine 92, lysine 107–serine 115, and serine 119. Glycine 79 lines the anthranilate pocket. Mg(2+) is bound at residue serine 91. Residue asparagine 110 coordinates anthranilate. An anthranilate-binding site is contributed by arginine 165. Mg(2+) is bound by residues aspartate 224 and glutamate 225.

The protein belongs to the anthranilate phosphoribosyltransferase family. Homodimer. It depends on Mg(2+) as a cofactor.

It catalyses the reaction N-(5-phospho-beta-D-ribosyl)anthranilate + diphosphate = 5-phospho-alpha-D-ribose 1-diphosphate + anthranilate. Its pathway is amino-acid biosynthesis; L-tryptophan biosynthesis; L-tryptophan from chorismate: step 2/5. Functionally, catalyzes the transfer of the phosphoribosyl group of 5-phosphorylribose-1-pyrophosphate (PRPP) to anthranilate to yield N-(5'-phosphoribosyl)-anthranilate (PRA). The polypeptide is Anthranilate phosphoribosyltransferase (Streptococcus mutans serotype c (strain ATCC 700610 / UA159)).